Here is a 495-residue protein sequence, read N- to C-terminus: B3 domain-containing protein Os01g0234100 (495 aa).

2 disordered regions span residues 1–25 (MAIDQPIKKRGRPPGSKNTKNKMEQ) and 88–108 (PGIPQTCNTQNTSNGRTNTTE). Over residues 92–108 (QTCNTQNTSNGRTNTTE) the composition is skewed to polar residues. A DNA-binding region (TF-B3) is located at residues 152-243 (FVKHMLHSHV…KFKVHIIRDK (92 aa)). Residues 268 to 282 (EATDNATKPKEDPET) show a composition bias toward basic and acidic residues. The disordered stretch occupies residues 268 to 289 (EATDNATKPKEDPETTRVSSKV).

The protein resides in the nucleus. In Oryza sativa subsp. japonica (Rice), this protein is B3 domain-containing protein Os01g0234100.